The following is a 263-amino-acid chain: Microtubule-associated protein RP/EB family member 1 (263 aa).

Residues 14-116 (NLSRHDMLAW…FVQWFKKFFD (103 aa)) form the Calponin-homology (CH) domain. The segment at 150–182 (KPLGTGSAGPQRPIVAQRTPATPKGGTGMVKKA) is disordered. One can recognise an EB1 C-terminal domain in the interval 180 to 250 (KKAAGDDESA…LYATDEGFVI (71 aa)).

This sequence belongs to the MAPRE family.

It is found in the cytoplasm. The protein localises to the cytoskeleton. Its subcellular location is the microtubule organizing center. The protein resides in the centrosome. It localises to the golgi apparatus. It is found in the spindle. The protein localises to the spindle pole. In terms of biological role, plus-end tracking protein (+TIP) that binds to the plus-end of microtubules and regulates the dynamics of the microtubule cytoskeleton. Promotes cytoplasmic microtubule nucleation and elongation. Involved in mitotic spindle positioning by stabilizing microtubules and promoting dynamic connection between astral microtubules and the cortex during mitotic chromosome segregation. The sequence is that of Microtubule-associated protein RP/EB family member 1 (MAPRE1) from Coturnix japonica (Japanese quail).